A 189-amino-acid polypeptide reads, in one-letter code: MDQTLSKEERNELMDLLQITRAAWGNLSMMKKAYKNVSKLYHPDKGGDSAKMQRLNELFQRVQVTLMEIRSQCGSSSSQVAWFFWDENFRTLGAFLGEKFNEKIIGLYPTCTKFVRANCNCIVCLLKKQHAGTKKNLKKPCLVWGECWCYKCYLVWFGFPEDFTSFRYWTLLMANMDLSMLKLWTELGF.

Met1 is modified (N-acetylmethionine; by host). The J domain occupies 12-75 (ELMDLLQITR…LMEIRSQCGS (64 aa)). A C4-type; atypical zinc finger spans residues 111–124 (CTKFVRANCNCIVC). Residues 130–152 (HAGTKKNLKKPCLVWGECWCYKC) form an H1C3-type; atypical zinc finger.

Interacts with host PPP2R1A; the interaction inhibits PP2A activity.

The protein localises to the host cytoplasm. It is found in the host nucleus. Promotes efficient viral genome replication by accelerating both G1 and S phase progression of the cell cycle. Inhibits host PP2A by binding to the A subunit, thereby displacing lower affinity regulatory B subunit. Inactivation of PP2A in turn results in the transactivation of cyclin A and cyclin D1 promoters. Late during the infection cycle, ST may induce dephosphorylation of host MTOR, leading to the inhibition of cap-dependent translation. May establish and maintain high levels of viral genomes during persistent infection in cell culture. This is Small t antigen from B-lymphotropic polyomavirus (LPV).